The following is a 1370-amino-acid chain: MDPSDFPSPFDPLTLPEKPLAGDLPVDMEFGEDLLESQTAPTRGWAPPGPSPSSGALDLLDTPAGLEKDPGVLDGATELLGLGGLLYKAPSPPEVDHGPEGTLAWDAGDQTLEPGPGGQTPEVVPPDPGAGANSCSPEGLLEPLAPDSPITLQSPHIEEEETTSIATARRGSPGQEEELPQGQPQSPNAPPSPSVGETLGDGINSSQTKPGGSSPPAHPSLPGDGLTAKASEKPPERKRSERVRRAEPPKPEVVDSTESIPVSDEDSDAMVDDPNDEDFVPFRPRRSPRMSLRSSVSQRAGRSAVGTKMTCAHCRTPLQKGQTAYQRKGLPQLFCSSSCLTTFSKKPSGKKTCTFCKKEIWNTKDSVVAQTGSGGSFHEFCTSVCLSLYEAQQQRPIPQSGDPADATRCSICQKTGEVLHEVSNGSVVHRLCSDSCFSKFRANKGLKTNCCDQCGAYIYTKTGSPGPELLFHEGQQKRFCNTTCLGAYKKKNTRVYPCVWCKTLCKNFEMLSHVDRNGKTSLFCSLCCTTSYKVKQAGLTGPPRPCSFCRRSLSDPCYYNKVDRTVYQFCSPSCWTKFQRTSPEGGIHLSCHYCHSLFSGKPEVLDWQDQVFQFCCRDCCEDFKRLRGVVSQCEHCRQEKLLHEKLRFSGVEKSFCSEGCVLLYKQDFTKKLGLCCITCTYCSQTCQRGVTEQLDGSTWDFCSEDCKSKYLLWYCKAARCHACKRQGKLLETIHWRGQIRHFCNQQCLLRFYSQQNQPNLDTQSGPESLLNSQSPESKPQTPSQTKVENSNTVRTPEENGNLGKIPVKTRSAPTAPTPPPPPPPATPRKNKAAMCKPLMQNRGVSCKVEMKSKGSQTEEWKPQVIVLPIPVPIFVPVPMHLYCQKVPVPFSMPIPVPVPMFLPTTLESTDKIVETIEELKVKIPSNPLEADILAMAEMIAEAEELDKASSDLCDLVSNQSAEGLLEDCDLFGPARDDVLAMAVKMANVLDEPGQDLEADFPKNPLDINPSVDFLFDCGLVGPEDVSTEQDLPRTMRKGQKRLVLSESCSRDSMSSQPSCTGLNYSYGVNAWKCWVQSKYANGETSKGDELRFGPKPMRIKEDILACSAAELNYGLAQFVREITRPNGERYEPDSIYYLCLGIQQYLLENNRMVNIFTDLYYLTFVQELNKSLSTWQPTLLPNNTVFSRVEEEHLWECKQLGVYSPFVLLNTLMFFNTKFFGLQTAEEHMQLSFTNVVRQSRKCTTPRGTTKVVSIRYYAPVRQRKGRDTGPGKRKREDEAPILEQRENRMNPLRCPVKFYEFYLSKCPESLRTRNDVFYLQPERSCIAESPLWYSVIPMDRSMLESMLNRILAVREIYEELGRPGEEDLD.

Composition is skewed to low complexity over residues 1 to 12 (MDPSDFPSPFDP) and 52 to 61 (PSSGALDLLD). 2 disordered regions span residues 1–72 (MDPS…DPGV) and 90–301 (PSPP…QRAG). Basic and acidic residues predominate over residues 230–253 (ASEKPPERKRSERVRRAEPPKPEV). Phosphoserine occurs at positions 263 and 267. Residues 263–279 (SDEDSDAMVDDPNDEDF) are compositionally biased toward acidic residues. Glycyl lysine isopeptide (Lys-Gly) (interchain with G-Cter in SUMO2) cross-links involve residues Lys308, Lys320, and Lys328. 9 consecutive MYM-type zinc fingers follow at residues 332 to 366 (QLFC…TKDS), 378 to 422 (HEFC…LHEV), 429 to 464 (HRLC…KTGS), 477 to 511 (KRFC…FEML), 521 to 559 (SLFC…PCYY), 567 to 604 (YQFC…KPEV), 612 to 646 (FQFC…HEKL), 653 to 692 (KSFC…GVTE), and 699 to 733 (WDFC…LETI). Phosphoserine is present on Ser464. Over residues 759–794 (NLDTQSGPESLLNSQSPESKPQTPSQTKVENSNTVR) the composition is skewed to polar residues. Residues 759-830 (NLDTQSGPES…PPPPATPRKN (72 aa)) are disordered. Residues Lys778 and Lys786 each participate in a glycyl lysine isopeptide (Lys-Gly) (interchain with G-Cter in SUMO2) cross-link. Position 795 is a phosphothreonine (Thr795). Lys804 participates in a covalent cross-link: Glycyl lysine isopeptide (Lys-Gly) (interchain with G-Cter in SUMO2). Positions 815 to 826 (APTPPPPPPPAT) are enriched in pro residues. Residues Thr817 and Thr826 each carry the phosphothreonine modification. Glycyl lysine isopeptide (Lys-Gly) (interchain with G-Cter in SUMO2) cross-links involve residues Lys847, Lys861, Lys920, and Lys1275.

May be a component of a BHC histone deacetylase complex that contains HDAC1, HDAC2, HMG20B/BRAF35, KDM1A, RCOR1/CoREST, PHF21A/BHC80, ZMYM2, ZNF217, ZMYM3, GSE1 and GTF2I. Most abundant in brain, moderate in muscle and heart, low in other tissues except placenta.

Its subcellular location is the nucleus. Plays a role in the regulation of cell morphology and cytoskeletal organization. The chain is Zinc finger MYM-type protein 3 (ZMYM3) from Homo sapiens (Human).